We begin with the raw amino-acid sequence, 476 residues long: Methylenetetrahydrofolate--tRNA-(uracil-5-)-methyltransferase TrmFO (476 aa).

Position 13–18 (13–18) interacts with FAD; it reads GGGLAG. Residues 425-446 form a disordered region; it reads PPLESPPTHGADGKKLRGPDKT. Positions 435–446 are enriched in basic and acidic residues; sequence ADGKKLRGPDKT.

The protein belongs to the MnmG family. TrmFO subfamily. Requires FAD as cofactor.

It is found in the cytoplasm. It catalyses the reaction uridine(54) in tRNA + (6R)-5,10-methylene-5,6,7,8-tetrahydrofolate + NADH + H(+) = 5-methyluridine(54) in tRNA + (6S)-5,6,7,8-tetrahydrofolate + NAD(+). The enzyme catalyses uridine(54) in tRNA + (6R)-5,10-methylene-5,6,7,8-tetrahydrofolate + NADPH + H(+) = 5-methyluridine(54) in tRNA + (6S)-5,6,7,8-tetrahydrofolate + NADP(+). Functionally, catalyzes the folate-dependent formation of 5-methyl-uridine at position 54 (M-5-U54) in all tRNAs. The protein is Methylenetetrahydrofolate--tRNA-(uracil-5-)-methyltransferase TrmFO of Rhodopseudomonas palustris (strain BisB18).